A 181-amino-acid polypeptide reads, in one-letter code: Acireductone dioxygenase (181 aa).

H97, H99, E103, and H141 together coordinate Fe(2+). The Ni(2+) site is built by H97, H99, E103, and H141.

The protein belongs to the acireductone dioxygenase (ARD) family. As to quaternary structure, monomer. The cofactor is Fe(2+). It depends on Ni(2+) as a cofactor.

It carries out the reaction 1,2-dihydroxy-5-(methylsulfanyl)pent-1-en-3-one + O2 = 3-(methylsulfanyl)propanoate + CO + formate + 2 H(+). The enzyme catalyses 1,2-dihydroxy-5-(methylsulfanyl)pent-1-en-3-one + O2 = 4-methylsulfanyl-2-oxobutanoate + formate + 2 H(+). It participates in amino-acid biosynthesis; L-methionine biosynthesis via salvage pathway; L-methionine from S-methyl-5-thio-alpha-D-ribose 1-phosphate: step 5/6. Functionally, catalyzes 2 different reactions between oxygen and the acireductone 1,2-dihydroxy-3-keto-5-methylthiopentene (DHK-MTPene) depending upon the metal bound in the active site. Fe-containing acireductone dioxygenase (Fe-ARD) produces formate and 2-keto-4-methylthiobutyrate (KMTB), the alpha-ketoacid precursor of methionine in the methionine recycle pathway. Ni-containing acireductone dioxygenase (Ni-ARD) produces methylthiopropionate, carbon monoxide and formate, and does not lie on the methionine recycle pathway. The sequence is that of Acireductone dioxygenase from Pseudomonas aeruginosa (strain UCBPP-PA14).